The following is a 150-amino-acid chain: Prolamin PPROL 14E (150 aa).

An N-terminal signal peptide occupies residues 1–19 (MKIIFVFALLAIAACSASA). Q20 carries the post-translational modification Pyrrolidone carboxylic acid.

Belongs to the prolamin family.

The protein resides in the vacuole. Its subcellular location is the aleurone grain. In terms of biological role, seed storage protein; serves as a source of nitrogen, carbon and sulfur for the young developing seedling. This chain is Prolamin PPROL 14E, found in Oryza sativa subsp. indica (Rice).